Reading from the N-terminus, the 112-residue chain is Nucleoid-associated protein FTH_1374 (112 aa).

The tract at residues 1 to 27 (MNFDMSKLMQQAQKMQEQMKKAQQERE) is disordered. Residues 17 to 27 (EQMKKAQQERE) are compositionally biased toward basic and acidic residues.

The protein belongs to the YbaB/EbfC family. In terms of assembly, homodimer.

It is found in the cytoplasm. The protein localises to the nucleoid. Its function is as follows. Binds to DNA and alters its conformation. May be involved in regulation of gene expression, nucleoid organization and DNA protection. This Francisella tularensis subsp. holarctica (strain OSU18) protein is Nucleoid-associated protein FTH_1374.